Here is a 304-residue protein sequence, read N- to C-terminus: Protein INO2 (304 aa).

Residues 236 to 290 (VRKWKHVQMEKIRRINTKEAFERLIKSVRTPPKENGKRIPKHILLTCVMNDIKSI) form the bHLH domain.

Efficient DNA binding requires dimerization with another bHLH protein.

It is found in the nucleus. Positive regulatory factor required for depression of the coregulated phospholipid biosynthetic enzymes. Also involved in the expression of ITR1. This chain is Protein INO2 (INO2), found in Saccharomyces cerevisiae (strain ATCC 204508 / S288c) (Baker's yeast).